We begin with the raw amino-acid sequence, 325 residues long: H-2 class I histocompatibility antigen, Q10 alpha chain (325 aa).

Residues 1–24 (MGAMAPRTLLLLLAAALAPTQTQA) form the signal peptide. The alpha-1 stretch occupies residues 25–114 (GSHSMRYFET…LLGYYNQSES (90 aa)). The Extracellular portion of the chain corresponds to 25–310 (GSHSMRYFET…PPSTDSIMSH (286 aa)). An N-linked (GlcNAc...) asparagine glycan is attached at Asn110. Positions 115–206 (GSHTIQWMYG…ELGKETLLRT (92 aa)) are alpha-2. Intrachain disulfides connect Cys125/Cys188 and Cys227/Cys283. An alpha-3 region spans residues 207–298 (DPPKTHVTHH…GLPEPLTLRW (92 aa)). Residues 209–297 (PKTHVTHHPG…EGLPEPLTLR (89 aa)) enclose the Ig-like C1-type domain. Asn280 carries an N-linked (GlcNAc...) asparagine glycan. The connecting peptide stretch occupies residues 299–310 (EPPPSTDSIMSH). Residues 311 to 324 (IADLLWPSLKLWWY) form a helical membrane-spanning segment.

Belongs to the MHC class I family. Heterodimer of an alpha chain and a beta chain (beta-2-microglobulin).

It is found in the membrane. Functionally, involved in the presentation of foreign antigens to the immune system. The sequence is that of H-2 class I histocompatibility antigen, Q10 alpha chain (H2-Q10) from Mus musculus (Mouse).